A 435-amino-acid chain; its full sequence is Enolase (435 aa).

Gln163 lines the (2R)-2-phosphoglycerate pocket. The Proton donor role is filled by Glu205. Mg(2+) contacts are provided by Asp243, Glu292, and Asp319. Lys344, Arg373, Ser374, and Lys395 together coordinate (2R)-2-phosphoglycerate. The Proton acceptor role is filled by Lys344.

It belongs to the enolase family. Requires Mg(2+) as cofactor.

The protein resides in the cytoplasm. Its subcellular location is the secreted. It localises to the cell surface. The catalysed reaction is (2R)-2-phosphoglycerate = phosphoenolpyruvate + H2O. It functions in the pathway carbohydrate degradation; glycolysis; pyruvate from D-glyceraldehyde 3-phosphate: step 4/5. In terms of biological role, catalyzes the reversible conversion of 2-phosphoglycerate (2-PG) into phosphoenolpyruvate (PEP). It is essential for the degradation of carbohydrates via glycolysis. This chain is Enolase, found in Streptococcus pyogenes serotype M12 (strain MGAS2096).